The sequence spans 99 residues: A-type ATP synthase subunit F (99 aa).

The protein belongs to the V-ATPase F subunit family. In terms of assembly, has multiple subunits with at least A(3), B(3), C, D, E, F, H, I and proteolipid K(x).

It localises to the cell membrane. Functionally, component of the A-type ATP synthase that produces ATP from ADP in the presence of a proton gradient across the membrane. This chain is A-type ATP synthase subunit F, found in Methanococcoides burtonii (strain DSM 6242 / NBRC 107633 / OCM 468 / ACE-M).